The sequence spans 570 residues: Proline--tRNA ligase (570 aa).

The protein belongs to the class-II aminoacyl-tRNA synthetase family. ProS type 1 subfamily. In terms of assembly, homodimer.

It localises to the cytoplasm. The enzyme catalyses tRNA(Pro) + L-proline + ATP = L-prolyl-tRNA(Pro) + AMP + diphosphate. In terms of biological role, catalyzes the attachment of proline to tRNA(Pro) in a two-step reaction: proline is first activated by ATP to form Pro-AMP and then transferred to the acceptor end of tRNA(Pro). As ProRS can inadvertently accommodate and process non-cognate amino acids such as alanine and cysteine, to avoid such errors it has two additional distinct editing activities against alanine. One activity is designated as 'pretransfer' editing and involves the tRNA(Pro)-independent hydrolysis of activated Ala-AMP. The other activity is designated 'posttransfer' editing and involves deacylation of mischarged Ala-tRNA(Pro). The misacylated Cys-tRNA(Pro) is not edited by ProRS. The protein is Proline--tRNA ligase of Clostridium acetobutylicum (strain ATCC 824 / DSM 792 / JCM 1419 / IAM 19013 / LMG 5710 / NBRC 13948 / NRRL B-527 / VKM B-1787 / 2291 / W).